Reading from the N-terminus, the 606-residue chain is Gamma-aminobutyric acid receptor subunit beta (606 aa).

The first 44 residues, 1-44 (MSDSKMDKLARMAPLPRTPLLTIWLAINMALIAQETGHKRIHTV), serve as a signal peptide directing secretion. Residues 45–268 (QAATGGGSML…CEIQFVRSMG (224 aa)) lie on the Extracellular side of the membrane. N-linked (GlcNAc...) asparagine glycosylation occurs at Asn-58. Cys-185 and Cys-199 are joined by a disulfide. N-linked (GlcNAc...) asparagine glycosylation occurs at Asn-253. 3 helical membrane passes run 269 to 291 (YYLI…SFWL), 297 to 316 (PARV…LMSS), and 333 to 356 (YLGT…YMAK). The Cytoplasmic segment spans residues 357-568 (RIQMRKQRFM…LGITPSDIDK (212 aa)). 2 disordered regions span residues 376-451 (KQQL…VSNR) and 482-542 (HDPK…AAVP). A compositionally biased stretch (low complexity) spans 381-395 (GANQQQANPNPNANV). Residues 396–425 (GGPGGVGVGPGGPGGPGGGVNVGVGMGMGP) show a composition bias toward gly residues. A compositionally biased stretch (basic residues) spans 430-443 (GHGHHAHSHGHPHA). Residues 499-536 (GGRGGPQSHGPGPGQGGGPPGGGGGGGGGGGPPEGGGD) are compositionally biased toward gly residues. Residues 569 to 590 (YSRIVFPVCFVCFNLMYWIIYL) form a helical membrane-spanning segment.

The protein belongs to the ligand-gated ion channel (TC 1.A.9) family. Gamma-aminobutyric acid receptor (TC 1.A.9.5) subfamily.

It is found in the postsynaptic cell membrane. Its subcellular location is the cell membrane. In terms of biological role, GABA, an inhibitory neurotransmitter, mediates neuronal inhibition by binding to the GABA receptor and opening an integral chloride channel. This Drosophila simulans (Fruit fly) protein is Gamma-aminobutyric acid receptor subunit beta (Rdl).